A 184-amino-acid polypeptide reads, in one-letter code: Bifunctional protein PyrR (184 aa).

Residues 105 to 117 (VVMVDDVLFTGRT) carry the PRPP-binding motif.

The protein belongs to the purine/pyrimidine phosphoribosyltransferase family. PyrR subfamily.

The catalysed reaction is UMP + diphosphate = 5-phospho-alpha-D-ribose 1-diphosphate + uracil. Regulates the transcription of the pyrimidine nucleotide (pyr) operon in response to exogenous pyrimidines. In terms of biological role, also displays a weak uracil phosphoribosyltransferase activity which is not physiologically significant. In Rubrobacter xylanophilus (strain DSM 9941 / JCM 11954 / NBRC 16129 / PRD-1), this protein is Bifunctional protein PyrR.